The chain runs to 250 residues: 2,5-dichloro-2,5-cyclohexadiene-1,4-diol dehydrogenase (250 aa).

9–34 lines the NAD(+) pocket; that stretch reads IIVTGGGSGIGRATVELLVASGANVA. Ser141 contributes to the substrate binding site. Tyr154 serves as the catalytic Proton acceptor.

This sequence belongs to the short-chain dehydrogenases/reductases (SDR) family.

The catalysed reaction is 2,5-dichlorocyclohexa-2,5-dien-1,4-diol + NAD(+) = 2,5-dichlorohydroquinone + NADH + H(+). It functions in the pathway xenobiotic degradation; gamma-hexachlorocyclohexane degradation. Catalyzes the dehydrogenation of 2,5-dichloro-2,5-cyclohexadiene-1,4-diol (2,5-DDOL) to 2,5-dichlorohydroquinone (2,5-DCHQ), a step in the degradation of gamma-hexachlorocyclohexane (gamma-HCH or lindane). This chain is 2,5-dichloro-2,5-cyclohexadiene-1,4-diol dehydrogenase, found in Sphingobium indicum (strain DSM 16412 / CCM 7286 / MTCC 6364 / B90A).